The primary structure comprises 300 residues: tRNA dimethylallyltransferase (300 aa).

11-18 contacts ATP; sequence GPTAVGKS. Substrate is bound at residue 13–18; the sequence is TAVGKS. Residues 35 to 38 are interaction with substrate tRNA; sequence DSIQ.

It belongs to the IPP transferase family. As to quaternary structure, monomer. The cofactor is Mg(2+).

The catalysed reaction is adenosine(37) in tRNA + dimethylallyl diphosphate = N(6)-dimethylallyladenosine(37) in tRNA + diphosphate. Functionally, catalyzes the transfer of a dimethylallyl group onto the adenine at position 37 in tRNAs that read codons beginning with uridine, leading to the formation of N6-(dimethylallyl)adenosine (i(6)A). This chain is tRNA dimethylallyltransferase, found in Borrelia duttonii (strain Ly).